We begin with the raw amino-acid sequence, 298 residues long: Putative S-adenosyl-L-methionine-dependent methyltransferase MSMEG_1480/MSMEI_1444 (298 aa).

Residues Asp-127 and 156 to 157 contribute to the S-adenosyl-L-methionine site; that span reads DL.

The protein belongs to the UPF0677 family.

In terms of biological role, exhibits S-adenosyl-L-methionine-dependent methyltransferase activity. The chain is Putative S-adenosyl-L-methionine-dependent methyltransferase MSMEG_1480/MSMEI_1444 from Mycolicibacterium smegmatis (strain ATCC 700084 / mc(2)155) (Mycobacterium smegmatis).